The primary structure comprises 400 residues: Mu-type opioid receptor (400 aa).

Over 1–68 the chain is Extracellular; sequence MDSSAVPANA…CPPTGSPSMI (68 aa). Asparagine 9, asparagine 12, asparagine 33, asparagine 40, and asparagine 48 each carry an N-linked (GlcNAc...) asparagine glycan. A helical membrane pass occupies residues 69–93; it reads TAITIMALYSIVCVVGLFGNFLVMY. Over 94-106 the chain is Cytoplasmic; it reads VIVRYTKMKTATN. Residues 107–131 form a helical membrane-spanning segment; it reads IYIFNLALADALATSTLPFQSVNYL. Residues 132-142 lie on the Extracellular side of the membrane; sequence MGTWPFGTILC. Cysteine 142 and cysteine 219 are oxidised to a cystine. Residues 143 to 165 traverse the membrane as a helical segment; sequence KIVISIDYYNMFTSIFTLCTMSV. The Cytoplasmic segment spans residues 166-185; it reads DRYIAVCHPVKALDFRTPRN. A Phosphotyrosine modification is found at tyrosine 168. A helical transmembrane segment spans residues 186–207; it reads AKIVNVCNWIISSAIGLPVMFM. At 208–230 the chain is on the extracellular side; sequence ATTKYRQGSIDCTLTFSHPTWYW. A helical transmembrane segment spans residues 231-255; that stretch reads ENLLKICVFIFAFIMPVLIITVCYG. The Cytoplasmic segment spans residues 256 to 279; it reads LMILRLKSVRMLSGSKEKDRNLRR. The helical transmembrane segment at 280–306 threads the bilayer; it reads ITRMVLVVVAVFIVCWTPIHIYVIIKA. At 307–314 the chain is on the extracellular side; the sequence is LVTIPETT. A helical transmembrane segment spans residues 315-338; sequence FQTVSWHFCIALGYTNSCLNPVLY. Positions 334 to 338 match the NPxxY; plays a role in stabilizing the activated conformation of the receptor motif; that stretch reads NPVLY. Over 339 to 400 the chain is Cytoplasmic; the sequence is AFLDENFKRC…NLEAETAPLP (62 aa). Cysteine 353 carries S-palmitoyl cysteine lipidation. Serine 365 is subject to Phosphoserine. Threonine 372 carries the post-translational modification Phosphothreonine. Serine 377 carries the phosphoserine modification. Threonine 396 carries the phosphothreonine modification.

The protein belongs to the G-protein coupled receptor 1 family. Forms homooligomers and heterooligomers with other GPCRs, such as OPRD1, OPRK1, OPRL1, NPFFR2, ADRA2A, SSTR2, CNR1 and CCR5 (probably in dimeric forms). Interacts with heterotrimeric G proteins; interaction with a heterotrimeric complex containing GNAI1, GNB1 and GNG2 stabilizes the active conformation of the receptor and increases its affinity for endomorphin-2, the synthetic opioid peptide DAMGO and for morphinan agonists. Interacts with PPL; the interaction disrupts agonist-mediated G-protein activation. Interacts (via C-terminus) with DNAJB4 (via C-terminus). Interacts with calmodulin; the interaction inhibits the constitutive activity of OPRM1; it abolishes basal and attenuates agonist-stimulated G-protein coupling. Interacts with FLNA, PLD2, RANBP9 and WLS and GPM6A. Interacts with RTP4. Interacts with SYP and GNAS. Interacts with RGS9, RGS17, RGS20, RGS4, PPP1R9B and HINT1. Post-translationally, phosphorylated. Differentially phosphorylated in basal and agonist-induced conditions. Agonist-mediated phosphorylation modulates receptor internalization. Phosphorylated by GRK2 in a agonist-dependent manner. Phosphorylation at Tyr-168 requires receptor activation, is dependent on non-receptor protein tyrosine kinase Src and results in a decrease in agonist efficacy by reducing G-protein coupling efficiency. Phosphorylated on tyrosine residues; the phosphorylation is involved in agonist-induced G-protein-independent receptor down-regulation. Phosphorylation at Ser-377 is involved in G-protein-dependent but not beta-arrestin-dependent activation of the ERK pathway. Ubiquitinated. A basal ubiquitination seems not to be related to degradation. Ubiquitination is increased upon formation of OPRM1:OPRD1 oligomers leading to proteasomal degradation; the ubiquitination is diminished by RTP4.

The protein resides in the cell membrane. The protein localises to the cell projection. It is found in the axon. It localises to the perikaryon. Its subcellular location is the dendrite. The protein resides in the endosome. Its function is as follows. Receptor for endogenous opioids such as beta-endorphin and endomorphin. Receptor for natural and synthetic opioids including morphine, heroin, DAMGO, fentanyl, etorphine, buprenorphin and methadone. Also activated by enkephalin peptides, such as Met-enkephalin or Met-enkephalin-Arg-Phe, with higher affinity for Met-enkephalin-Arg-Phe. Agonist binding to the receptor induces coupling to an inactive GDP-bound heterotrimeric G-protein complex and subsequent exchange of GDP for GTP in the G-protein alpha subunit leading to dissociation of the G-protein complex with the free GTP-bound G-protein alpha and the G-protein beta-gamma dimer activating downstream cellular effectors. The agonist- and cell type-specific activity is predominantly coupled to pertussis toxin-sensitive G(i) and G(o) G alpha proteins, GNAI1, GNAI2, GNAI3 and GNAO1, and to a lesser extent to pertussis toxin-insensitive G alpha proteins GNAZ and GNA15. They mediate an array of downstream cellular responses, including inhibition of adenylate cyclase activity and both N-type and L-type calcium channels, activation of inward rectifying potassium channels, mitogen-activated protein kinase (MAPK), phospholipase C (PLC), phosphoinositide/protein kinase (PKC), phosphoinositide 3-kinase (PI3K) and regulation of NF-kappa-B. Also couples to adenylate cyclase stimulatory G alpha proteins. The selective temporal coupling to G-proteins and subsequent signaling can be regulated by RGSZ proteins, such as RGS9, RGS17 and RGS4. Phosphorylation by members of the GPRK subfamily of Ser/Thr protein kinases and association with beta-arrestins is involved in short-term receptor desensitization. Beta-arrestins associate with the GPRK-phosphorylated receptor and uncouple it from the G-protein thus terminating signal transduction. The phosphorylated receptor is internalized through endocytosis via clathrin-coated pits which involves beta-arrestins. The activation of the ERK pathway occurs either in a G-protein-dependent or a beta-arrestin-dependent manner and is regulated by agonist-specific receptor phosphorylation. Acts as a class A G-protein coupled receptor (GPCR) which dissociates from beta-arrestin at or near the plasma membrane and undergoes rapid recycling. Receptor down-regulation pathways are varying with the agonist and occur dependent or independent of G-protein coupling. Endogenous ligands induce rapid desensitization, endocytosis and recycling. Heterooligomerization with other GPCRs can modulate agonist binding, signaling and trafficking properties. Involved in neurogenesis. This is Mu-type opioid receptor (OPRM1) from Saimiri boliviensis boliviensis (Bolivian squirrel monkey).